A 320-amino-acid polypeptide reads, in one-letter code: Cytochrome f (320 aa).

A signal peptide spans 1 to 35 (MHTKNLFYSRTQQITQYLSALLMMVILTRTSISSA). Positions 36, 56, 59, and 60 each coordinate heme. Residues 286-306 (VQVLLFFFASIILAQIFLVLK) form a helical membrane-spanning segment.

Belongs to the cytochrome f family. As to quaternary structure, the 4 large subunits of the cytochrome b6-f complex are cytochrome b6, subunit IV (17 kDa polypeptide, petD), cytochrome f and the Rieske protein, while the 4 small subunits are PetG, PetL, PetM and PetN. The complex functions as a dimer. Heme serves as cofactor.

The protein localises to the plastid thylakoid membrane. Component of the cytochrome b6-f complex, which mediates electron transfer between photosystem II (PSII) and photosystem I (PSI), cyclic electron flow around PSI, and state transitions. This is Cytochrome f from Cuscuta gronovii (Common dodder).